Here is a 359-residue protein sequence, read N- to C-terminus: Double-stranded RNA-binding protein 3 (359 aa).

DRBM domains lie at 1–70 and 87–155; these read MYKN…ALSS and IYKN…SLRK. The segment covering 266-280 has biased composition (basic and acidic residues); that stretch reads EKKQSLDDPKPEMRI. 2 disordered regions span residues 266-292 and 328-359; these read EKKQ…SSSV and APPP…SLPN. Over residues 328–338 the composition is skewed to pro residues; the sequence is APPPKPNPNPN.

Its function is as follows. Binds double-stranded RNA. The polypeptide is Double-stranded RNA-binding protein 3 (DRB3) (Arabidopsis thaliana (Mouse-ear cress)).